Here is a 70-residue protein sequence, read N- to C-terminus: U2-agatoxin-Ao1l (70 aa).

Residues 1–20 form the signal peptide; that stretch reads MRAIISLLLISAMVFSIIEA. A propeptide spanning residues 21–34 is cleaved from the precursor; the sequence is VPEEEGLQLSEDER. Intrachain disulfides connect Cys37–Cys53, Cys44–Cys58, and Cys52–Cys68. At Leu69 the chain carries Leucine amide.

This sequence belongs to the neurotoxin 01 (U2-agtx) family. As to expression, expressed by the venom gland.

The protein localises to the secreted. Its function is as follows. Insect active toxin causing rapid but reversible paralysis in crickets. No activity shown in mammals. Does not show effect on mammalian voltage-gated calcium channels. The sequence is that of U2-agatoxin-Ao1l from Agelena orientalis (Funnel-web spider).